A 166-amino-acid polypeptide reads, in one-letter code: NAD(P)H-quinone oxidoreductase subunit I, chloroplastic (166 aa).

2 consecutive 4Fe-4S ferredoxin-type domains span residues 55–84 (GRIH…VDWK) and 95–124 (LNYS…MTEE). 8 residues coordinate [4Fe-4S] cluster: C64, C67, C70, C74, C104, C107, C110, and C114.

Belongs to the complex I 23 kDa subunit family. In terms of assembly, NDH is composed of at least 16 different subunits, 5 of which are encoded in the nucleus. [4Fe-4S] cluster serves as cofactor.

It is found in the plastid. The protein localises to the chloroplast thylakoid membrane. It catalyses the reaction a plastoquinone + NADH + (n+1) H(+)(in) = a plastoquinol + NAD(+) + n H(+)(out). The enzyme catalyses a plastoquinone + NADPH + (n+1) H(+)(in) = a plastoquinol + NADP(+) + n H(+)(out). In terms of biological role, NDH shuttles electrons from NAD(P)H:plastoquinone, via FMN and iron-sulfur (Fe-S) centers, to quinones in the photosynthetic chain and possibly in a chloroplast respiratory chain. The immediate electron acceptor for the enzyme in this species is believed to be plastoquinone. Couples the redox reaction to proton translocation, and thus conserves the redox energy in a proton gradient. In Guardiola tulocarpus, this protein is NAD(P)H-quinone oxidoreductase subunit I, chloroplastic.